Reading from the N-terminus, the 501-residue chain is Aldehyde dehydrogenase 1A1 (501 aa).

An N-acetylserine modification is found at serine 2. 2 positions are modified to N6-acetyllysine: lysine 91 and lysine 128. NAD(+)-binding positions include isoleucine 167–asparagine 170, lysine 193–glutamate 196, glycine 226–proline 227, and glycine 246–serine 247. Lysine 252 is subject to N6-acetyllysine. Glutamate 269 serves as the catalytic Proton acceptor. Glutamate 269 to glycine 271 serves as a coordination point for NAD(+). The active-site Nucleophile is cysteine 303. The tract at residues leucine 336 to serine 501 is mediates interaction with PRMT3. The residue at position 337 (threonine 337) is a Phosphothreonine. An NAD(+)-binding site is contributed by glutamate 349–lysine 353. Lysine 353 and lysine 367 each carry N6-acetyllysine. Glutamate 400–phenylalanine 402 lines the NAD(+) pocket. Lysine 410 is modified (N6-acetyllysine). Phosphoserine is present on serine 413. N6-acetyllysine occurs at positions 419, 435, and 495.

This sequence belongs to the aldehyde dehydrogenase family. Homotetramer. Interacts with PRMT3; the interaction is direct, inhibits ALDH1A1 aldehyde dehydrogenase activity and is independent of the methyltransferase activity of PRMT3. In terms of processing, the N-terminus is blocked most probably by acetylation. In terms of tissue distribution, expressed in retina. Expressed in lens and cornea (at protein level). Expressed by midbrain dopamine neurons.

The protein resides in the cytoplasm. It is found in the cytosol. The protein localises to the cell projection. Its subcellular location is the axon. The catalysed reaction is an aldehyde + NAD(+) + H2O = a carboxylate + NADH + 2 H(+). It carries out the reaction all-trans-retinal + NAD(+) + H2O = all-trans-retinoate + NADH + 2 H(+). It catalyses the reaction 9-cis-retinal + NAD(+) + H2O = 9-cis-retinoate + NADH + 2 H(+). The enzyme catalyses 11-cis-retinal + NAD(+) + H2O = 11-cis-retinoate + NADH + 2 H(+). The catalysed reaction is 13-cis-retinal + NAD(+) + H2O = 13-cis-retinoate + NADH + 2 H(+). It carries out the reaction 4-aminobutanal + NAD(+) + H2O = 4-aminobutanoate + NADH + 2 H(+). It catalyses the reaction 3-deoxyglucosone + NAD(+) + H2O = 2-dehydro-3-deoxy-D-gluconate + NADH + 2 H(+). The enzyme catalyses (E)-4-hydroxynon-2-enal + NAD(+) + H2O = (E)-4-hydroxynon-2-enoate + NADH + 2 H(+). The catalysed reaction is malonaldehyde + NAD(+) + H2O = 3-oxopropanoate + NADH + 2 H(+). It carries out the reaction hexanal + NAD(+) + H2O = hexanoate + NADH + 2 H(+). It catalyses the reaction propanal + NAD(+) + H2O = propanoate + NADH + 2 H(+). The enzyme catalyses acetaldehyde + NAD(+) + H2O = acetate + NADH + 2 H(+). The catalysed reaction is benzaldehyde + NAD(+) + H2O = benzoate + NADH + 2 H(+). Its pathway is cofactor metabolism; retinol metabolism. Its activity is regulated as follows. The aminobutyraldehyde dehydrogenase activity is negatively regulated by ethanol in vivo. Its function is as follows. Cytosolic dehydrogenase that catalyzes the irreversible oxidation of a wide range of aldehydes to their corresponding carboxylic acid. Functions downstream of retinol dehydrogenases and catalyzes the oxidation of retinaldehyde into retinoic acid, the second step in the oxidation of retinol/vitamin A into retinoic acid. This pathway is crucial to control the levels of retinol and retinoic acid, two important molecules which excess can be teratogenic and cytotoxic. Also oxidizes aldehydes resulting from lipid peroxidation like (E)-4-hydroxynon-2-enal/HNE, malonaldehyde and hexanal that form protein adducts and are highly cytotoxic. By participating for instance to the clearance of (E)-4-hydroxynon-2-enal/HNE in the lens epithelium prevents the formation of HNE-protein adducts and lens opacification. Also functions downstream of fructosamine-3-kinase in the fructosamine degradation pathway by catalyzing the oxidation of 3-deoxyglucosone, the carbohydrate product of fructosamine 3-phosphate decomposition, which is itself a potent glycating agent that may react with lysine and arginine side-chains of proteins. Also has an aminobutyraldehyde dehydrogenase activity and is probably part of an alternative pathway for the biosynthesis of GABA/4-aminobutanoate in midbrain, thereby playing a role in GABAergic synaptic transmission. The protein is Aldehyde dehydrogenase 1A1 of Mus musculus (Mouse).